Here is a 132-residue protein sequence, read N- to C-terminus: Small ribosomal subunit protein uS9 (132 aa).

Belongs to the universal ribosomal protein uS9 family.

In Methanothrix thermoacetophila (strain DSM 6194 / JCM 14653 / NBRC 101360 / PT) (Methanosaeta thermophila), this protein is Small ribosomal subunit protein uS9.